A 377-amino-acid polypeptide reads, in one-letter code: Probable riboflavin import permease protein RfuC (377 aa).

A run of 10 helical transmembrane segments spans residues 4 to 24 (VINS…VIVL), 49 to 69 (ALFH…CALK), 72 to 92 (MINL…ALLL), 98 to 118 (VGFL…AGIL), 135 to 155 (ITSF…IITV), 182 to 202 (FGVP…GCFF), 223 to 245 (FVGF…LFGL), 249 to 268 (FSVV…GMGY), 274 to 294 (ALIA…FAWM), and 303 to 323 (LGAH…FLLI).

The protein belongs to the binding-protein-dependent transport system permease family. In terms of assembly, the complex is probably composed of two ATP-binding proteins (RfuB), two transmembrane proteins (RfuC and RfuD) and a solute-binding protein (RfuA).

The protein localises to the cell inner membrane. Functionally, probably part of the ABC transporter complex RfuABCD involved in riboflavin import. Probably responsible for the translocation of the substrate across the membrane. The sequence is that of Probable riboflavin import permease protein RfuC from Treponema pallidum (strain Nichols).